A 261-amino-acid polypeptide reads, in one-letter code: 4-hydroxy-tetrahydrodipicolinate reductase (261 aa).

NAD(+) is bound at residue 8-13 (GYKGRM). Arginine 36 contributes to the NADP(+) binding site. Residues 95–97 (GTT) and 121–124 (APNF) each bind NAD(+). Histidine 151 functions as the Proton donor/acceptor in the catalytic mechanism. Histidine 152 lines the (S)-2,3,4,5-tetrahydrodipicolinate pocket. Catalysis depends on lysine 155, which acts as the Proton donor. 161-162 (GT) provides a ligand contact to (S)-2,3,4,5-tetrahydrodipicolinate.

It belongs to the DapB family.

Its subcellular location is the cytoplasm. The catalysed reaction is (S)-2,3,4,5-tetrahydrodipicolinate + NAD(+) + H2O = (2S,4S)-4-hydroxy-2,3,4,5-tetrahydrodipicolinate + NADH + H(+). It catalyses the reaction (S)-2,3,4,5-tetrahydrodipicolinate + NADP(+) + H2O = (2S,4S)-4-hydroxy-2,3,4,5-tetrahydrodipicolinate + NADPH + H(+). The protein operates within amino-acid biosynthesis; L-lysine biosynthesis via DAP pathway; (S)-tetrahydrodipicolinate from L-aspartate: step 4/4. Catalyzes the conversion of 4-hydroxy-tetrahydrodipicolinate (HTPA) to tetrahydrodipicolinate. This chain is 4-hydroxy-tetrahydrodipicolinate reductase, found in Lactiplantibacillus plantarum (strain ATCC BAA-793 / NCIMB 8826 / WCFS1) (Lactobacillus plantarum).